A 421-amino-acid polypeptide reads, in one-letter code: 3-isopropylmalate dehydratase large subunit (421 aa).

3 residues coordinate [4Fe-4S] cluster: C301, C361, and C364.

Belongs to the aconitase/IPM isomerase family. LeuC type 2 subfamily. In terms of assembly, heterodimer of LeuC and LeuD. Requires [4Fe-4S] cluster as cofactor.

The enzyme catalyses (2R,3S)-3-isopropylmalate = (2S)-2-isopropylmalate. Its pathway is amino-acid biosynthesis; L-leucine biosynthesis; L-leucine from 3-methyl-2-oxobutanoate: step 2/4. Catalyzes the isomerization between 2-isopropylmalate and 3-isopropylmalate, via the formation of 2-isopropylmaleate. This Desulfitobacterium hafniense (strain Y51) protein is 3-isopropylmalate dehydratase large subunit.